The primary structure comprises 491 residues: Glutamyl-tRNA(Gln) amidotransferase subunit A (491 aa).

Active-site charge relay system residues include K77 and S152. S176 (acyl-ester intermediate) is an active-site residue.

Belongs to the amidase family. GatA subfamily. As to quaternary structure, heterotrimer of A, B and C subunits.

The catalysed reaction is L-glutamyl-tRNA(Gln) + L-glutamine + ATP + H2O = L-glutaminyl-tRNA(Gln) + L-glutamate + ADP + phosphate + H(+). Functionally, allows the formation of correctly charged Gln-tRNA(Gln) through the transamidation of misacylated Glu-tRNA(Gln) in organisms which lack glutaminyl-tRNA synthetase. The reaction takes place in the presence of glutamine and ATP through an activated gamma-phospho-Glu-tRNA(Gln). This Chlamydia felis (strain Fe/C-56) (Chlamydophila felis) protein is Glutamyl-tRNA(Gln) amidotransferase subunit A.